Reading from the N-terminus, the 77-residue chain is ATP synthase subunit c (77 aa).

2 helical membrane-spanning segments follow: residues 13–33 (IATV…GIVA) and 55–75 (FLGI…YFIF).

It belongs to the ATPase C chain family. As to quaternary structure, F-type ATPases have 2 components, F(1) - the catalytic core - and F(0) - the membrane proton channel. F(1) has five subunits: alpha(3), beta(3), gamma(1), delta(1), epsilon(1). F(0) has three main subunits: a(1), b(2) and c(10-14). The alpha and beta chains form an alternating ring which encloses part of the gamma chain. F(1) is attached to F(0) by a central stalk formed by the gamma and epsilon chains, while a peripheral stalk is formed by the delta and b chains.

The protein resides in the cell membrane. Functionally, f(1)F(0) ATP synthase produces ATP from ADP in the presence of a proton or sodium gradient. F-type ATPases consist of two structural domains, F(1) containing the extramembraneous catalytic core and F(0) containing the membrane proton channel, linked together by a central stalk and a peripheral stalk. During catalysis, ATP synthesis in the catalytic domain of F(1) is coupled via a rotary mechanism of the central stalk subunits to proton translocation. Key component of the F(0) channel; it plays a direct role in translocation across the membrane. A homomeric c-ring of between 10-14 subunits forms the central stalk rotor element with the F(1) delta and epsilon subunits. The chain is ATP synthase subunit c from Clavibacter michiganensis subsp. michiganensis (strain NCPPB 382).